The sequence spans 526 residues: Arp2/3 complex-activating protein rickA (526 aa).

The disordered stretch occupies residues 305 to 356 (TTSSIAKPLENNVTPPPPLTKNNIPPPPPPPPLSKNNILPPPPPPMPTMAPA). Over residues 318–352 (TPPPPLTKNNIPPPPPPPPLSKNNILPPPPPPMPT) the composition is skewed to pro residues. WH2 domains are found at residues 383–400 (DTSD…LRKV) and 410–427 (SRDL…LRKV). Disordered stretches follow at residues 425–452 (RKVE…SKPN) and 464–526 (MEMS…FVRS). A central and acidic domains region spans residues 448 to 484 (VSKPNGVASILARRVAMEMSDSSSSSGSESDSGNWSD). Residues 464–480 (MEMSDSSSSSGSESDSG) show a composition bias toward low complexity. 2 stretches are compositionally biased toward polar residues: residues 481–491 (NWSDASVNSNK) and 506–526 (TTHA…FVRS).

In terms of assembly, homodimer.

The protein resides in the cell surface. Recruits and activates the Arp2/3 complex, which in turn leads to actin polymerization, promoting Rickettsia motility during infection. The sequence is that of Arp2/3 complex-activating protein rickA (rickA) from Rickettsia felis (strain ATCC VR-1525 / URRWXCal2) (Rickettsia azadi).